Reading from the N-terminus, the 172-residue chain is Large ribosomal subunit protein uL10 (172 aa).

This sequence belongs to the universal ribosomal protein uL10 family. As to quaternary structure, part of the ribosomal stalk of the 50S ribosomal subunit. The N-terminus interacts with L11 and the large rRNA to form the base of the stalk. The C-terminus forms an elongated spine to which L12 dimers bind in a sequential fashion forming a multimeric L10(L12)X complex.

Its function is as follows. Forms part of the ribosomal stalk, playing a central role in the interaction of the ribosome with GTP-bound translation factors. The protein is Large ribosomal subunit protein uL10 of Chlorobium phaeovibrioides (strain DSM 265 / 1930) (Prosthecochloris vibrioformis (strain DSM 265)).